The following is a 473-amino-acid chain: Alliin lyase 2 (473 aa).

An N-terminal signal peptide occupies residues 1–15 (MICLVILTCIIMSNS). Residues 16 to 25 (FVNNNNMVQA) constitute a propeptide that is removed on maturation. In terms of domain architecture, EGF-like; atypical spans 38–84 (EAVANINCSEHGRAFLDGIISEGSPKCECNTCYTGPDCSEKIQGCSA). N44 carries N-linked (GlcNAc...) asparagine glycosylation. 3 disulfide bridges follow: C45/C64, C66/C75, and C69/C82. 117–125 (YFFNPVSNF) contributes to the chloride binding site. N-linked (GlcNAc...) asparagine glycosylation is found at N171 and N216. K276 carries the post-translational modification N6-(pyridoxal phosphate)lysine. Residue N353 is glycosylated (N-linked (GlcNAc...) asparagine). C393 and C401 are oxidised to a cystine.

The protein belongs to the alliinase family. In terms of assembly, homodimer. Requires pyridoxal 5'-phosphate as cofactor. In terms of processing, glycosylated. In terms of tissue distribution, high expression in bulbs, lower expression in leaves, and no expression in roots.

Its subcellular location is the vacuole. It carries out the reaction an S-alkyl-L-cysteine S-oxide = an S-alkyl sulfenate + 2-aminoprop-2-enoate. The enzyme catalyses alliin = allylsulfenate + 2-aminoprop-2-enoate. Able to cleave the C-S bond of sulfoxide derivatives of Cys to produce allicin, thus giving rise to all sulfur compounds which are responsible for most of the properties of garlic, such as the specific smell and flavor as well as the health benefits like blood lipid or blood pressure lowering. The sequence is that of Alliin lyase 2 from Allium sativum (Garlic).